Reading from the N-terminus, the 611-residue chain is Aspartate--tRNA ligase, mitochondrial (611 aa).

A mitochondrion-targeting transit peptide spans 1–30 (MVLSRLPACLLPLVGTKVSIQGWLVATSRQ). Glu-192 lines the L-aspartate pocket. Residues 216 to 219 (QQYK) are aspartate. Position 238 (Arg-238) interacts with L-aspartate. ATP contacts are provided by residues 238–240 (RDE) and Glu-502. Residue Arg-509 participates in L-aspartate binding. An ATP-binding site is contributed by 554-557 (GFDR).

Belongs to the class-II aminoacyl-tRNA synthetase family. Type 1 subfamily.

Its subcellular location is the mitochondrion. It carries out the reaction tRNA(Asp) + L-aspartate + ATP = L-aspartyl-tRNA(Asp) + AMP + diphosphate. The polypeptide is Aspartate--tRNA ligase, mitochondrial (msd1) (Schizosaccharomyces pombe (strain 972 / ATCC 24843) (Fission yeast)).